Here is a 1117-residue protein sequence, read N- to C-terminus: Cytospin-A (1117 aa).

Disordered stretches follow at residues 1–176, 293–323, and 358–390; these read MKKA…NQIS, SLSP…GSVE, and SSDD…NASE. A compositionally biased stretch (low complexity) spans 45 to 90; it reads TAASLSKTKSSDDLLAGMAGGVTVTNGVKGKKSTCPSAAPSASAPA. Residues 93–117 are compositionally biased toward polar residues; that stretch reads TVENKSKISTGTASSTKRNTSTGNK. Basic and acidic residues-rich tracts occupy residues 120–131 and 158–171; these read SSTRERLRERTR and TATE…KSKS. Residues 168 to 280 are a coiled coil; it reads KSKSDNQISD…LNALGFSLEQ (113 aa). A compositionally biased stretch (polar residues) spans 293–303; that stretch reads SLSPEITPGNQ. Low complexity predominate over residues 358–377; that stretch reads SSDDALDAPSSSESEGIPSI. Ser-384, Ser-385, and Ser-389 each carry phosphoserine. 2 coiled-coil regions span residues 394 to 449 and 487 to 807; these read ACLT…MESL and RYME…RGRV. Residues Ser-868, Ser-881, and Ser-887 each carry the phosphoserine modification. The segment at 919–1001 is disordered; sequence RTSSASRPAS…SRIREERKDP (83 aa). A compositionally biased stretch (basic and acidic residues) spans 946 to 956; it reads RSSEEMKRDIS. A compositionally biased stretch (low complexity) spans 971–990; the sequence is TTSPQLSLSSSPTASVTPTT. The 106-residue stretch at 1011–1116 folds into the Calponin-homology (CH) domain; the sequence is GSKRNALLKW…YVTAIYKYFE (106 aa).

This sequence belongs to the cytospin-A family. As to quaternary structure, may interact with both microtubules and actin cytoskeleton.

Its subcellular location is the cytoplasm. The protein localises to the cytoskeleton. It is found in the spindle. It localises to the cell junction. The protein resides in the gap junction. Its function is as follows. Involved in cytokinesis and spindle organization. May play a role in actin cytoskeleton organization and microtubule stabilization and hence required for proper cell adhesion and migration. The protein is Cytospin-A (SPECC1L) of Pan troglodytes (Chimpanzee).